The chain runs to 874 residues: Alanine--tRNA ligase (874 aa).

Zn(2+)-binding residues include H562, H566, C665, and H669.

It belongs to the class-II aminoacyl-tRNA synthetase family. Zn(2+) serves as cofactor.

It is found in the cytoplasm. The catalysed reaction is tRNA(Ala) + L-alanine + ATP = L-alanyl-tRNA(Ala) + AMP + diphosphate. Its function is as follows. Catalyzes the attachment of alanine to tRNA(Ala) in a two-step reaction: alanine is first activated by ATP to form Ala-AMP and then transferred to the acceptor end of tRNA(Ala). Also edits incorrectly charged Ser-tRNA(Ala) and Gly-tRNA(Ala) via its editing domain. The chain is Alanine--tRNA ligase from Pseudomonas syringae pv. syringae (strain B728a).